Consider the following 437-residue polypeptide: Sodium/bile acid cotransporter 4 (437 aa).

The Extracellular portion of the chain corresponds to 1–103 (MDSLDNTTLL…PPFWDTPLNH (103 aa)). N-linked (GlcNAc...) asparagine glycans are attached at residues N6 and N20. The disordered stretch occupies residues 15-79 (SLLPDNLTLS…SSSLTVGVAG (65 aa)). Residues 22-41 (TLSPNAGSPSASTLSPLAVT) show a composition bias toward polar residues. The span at 42–74 (SSPGPGLSLAPSPSIGFSPEATPTPEPTSSSLT) shows a compositional bias: low complexity. Residues 104 to 124 (GLNVFVGAALCITMLGLGCTV) traverse the membrane as a helical segment. The Cytoplasmic portion of the chain corresponds to 125–140 (DVNHFGAHVRRPVGAL). The helical transmembrane segment at 141 to 161 (LAALCQFGFLPLLAFLLALIF) threads the bilayer. Residues 162 to 197 (KLDEVAAVAVLLCGCCPGGNLSNLMSLLVDGDMNLS) lie on the Extracellular side of the membrane. 2 N-linked (GlcNAc...) asparagine glycosylation sites follow: N181 and N195. The chain crosses the membrane as a helical span at residues 198 to 218 (IIMTISSTLLALVLMPLCLWI). Residues 219-233 (YSRAWINTPLVQLLP) are Cytoplasmic-facing. The helical transmembrane segment at 234–254 (LGAVTLTLCSTLIPIGLGVFI) threads the bilayer. At 255–267 (RYKYNRVADYIVK) the chain is on the extracellular side. The chain crosses the membrane as a helical span at residues 268–288 (VSLWSLLVTLVVLFIMTGTML). Residues 289-291 (GPE) lie on the Cytoplasmic side of the membrane. A helical membrane pass occupies residues 292–312 (LLASIPATVYVVAIFMPLAGY). Over 313-360 (ASGYGLATLFHLPPNCKRTVCLETGSQNVQLCTAILKLAFPPRFIGSM) the chain is Extracellular. A helical membrane pass occupies residues 361–381 (YMFPLLYALFQSAEAGVFVLI). Over 382–437 (YKMYGSEILHKREALDEDEDTDISYKKLKEEEMADTSYGTVGTDDLVMMETTQTAL) the chain is Cytoplasmic.

It belongs to the bile acid:sodium symporter (BASS) (TC 2.A.28) family. Activated following N-terminal proteolytic cleavage by thrombin and/or proteases. As to expression, highest expression in the brain and significantly above background levels in the eye, prostate, and whole embryo tissue preparations.

It localises to the cell membrane. Its function is as follows. Transporter for bile acids. The sequence is that of Sodium/bile acid cotransporter 4 (Slc10a4) from Mus musculus (Mouse).